Reading from the N-terminus, the 83-residue chain is MDTSLKKNNGALEADNKNYQNYKDEPDKISDVLDDTKYNSMVECCHKNYSTFAPQWDVKERNYIDVPEGPSAKKSIVHRCTII.

Residues 1–26 are disordered; sequence MDTSLKKNNGALEADNKNYQNYKDEP.

It belongs to the asfivirus L83L family. In terms of assembly, interacts with host IL1B.

Its subcellular location is the host cytoplasm. Functionally, may subvert the host innate immune response by interacting with host IL1B and interfering with its function. This is Protein L83L from Ornithodoros (relapsing fever ticks).